The following is a 142-amino-acid chain: Transcriptional regulator MraZ (142 aa).

SpoVT-AbrB domains are found at residues 5 to 51 and 77 to 120; these read ASAL…PRPE and AMDV…DSQT.

Belongs to the MraZ family. Forms oligomers.

It localises to the cytoplasm. Its subcellular location is the nucleoid. The chain is Transcriptional regulator MraZ from Burkholderia cenocepacia (strain ATCC BAA-245 / DSM 16553 / LMG 16656 / NCTC 13227 / J2315 / CF5610) (Burkholderia cepacia (strain J2315)).